Consider the following 439-residue polypeptide: Proline--tRNA ligase (439 aa).

Belongs to the class-II aminoacyl-tRNA synthetase family. ProS type 2 subfamily. Homodimer.

The protein resides in the cytoplasm. The enzyme catalyses tRNA(Pro) + L-proline + ATP = L-prolyl-tRNA(Pro) + AMP + diphosphate. Functionally, catalyzes the attachment of proline to tRNA(Pro) in a two-step reaction: proline is first activated by ATP to form Pro-AMP and then transferred to the acceptor end of tRNA(Pro). The chain is Proline--tRNA ligase from Nitrobacter winogradskyi (strain ATCC 25391 / DSM 10237 / CIP 104748 / NCIMB 11846 / Nb-255).